A 36-amino-acid chain; its full sequence is Delta-amaurobitoxin-Pl1c (36 aa).

4 disulfide bridges follow: cysteine 3/cysteine 19, cysteine 10/cysteine 24, cysteine 18/cysteine 34, and cysteine 26/cysteine 32.

Expressed by the venom gland.

Its subcellular location is the secreted. Functionally, binds at site 4 of sodium channels (Nav) and inhibits the fast inactivation of cockroach channels. This toxin is active only on insects. Has a potent activity against S.litura larvae. This chain is Delta-amaurobitoxin-Pl1c, found in Pireneitega luctuosa (Tangled nest spider).